An 88-amino-acid chain; its full sequence is Putative septation protein SpoVG (88 aa).

Belongs to the SpoVG family.

Its function is as follows. Could be involved in septation. This Lachnospira eligens (strain ATCC 27750 / DSM 3376 / VPI C15-48 / C15-B4) (Eubacterium eligens) protein is Putative septation protein SpoVG.